We begin with the raw amino-acid sequence, 342 residues long: Ribosomal RNA small subunit methyltransferase C (342 aa).

The protein belongs to the methyltransferase superfamily. RsmC family. As to quaternary structure, monomer.

Its subcellular location is the cytoplasm. The catalysed reaction is guanosine(1207) in 16S rRNA + S-adenosyl-L-methionine = N(2)-methylguanosine(1207) in 16S rRNA + S-adenosyl-L-homocysteine + H(+). In terms of biological role, specifically methylates the guanine in position 1207 of 16S rRNA in the 30S particle. This chain is Ribosomal RNA small subunit methyltransferase C, found in Salmonella arizonae (strain ATCC BAA-731 / CDC346-86 / RSK2980).